The sequence spans 463 residues: Glycerol-3-phosphate acyltransferase, chloroplastic (463 aa).

Residues 1–91 (MSIFFSPSSP…AATQPSAGSD (91 aa)) constitute a chloroplast transit peptide. 2 disordered regions span residues 18–37 (NANPRVSPSSSPSSAFTPPL) and 65–95 (AETVHGNKWPSPSSSSSAATQPSAGSDHGHS). Low complexity-rich tracts occupy residues 24–37 (SPSSSPSSAFTPPL) and 74–90 (PSPSSSSSAATQPSAGS). An HXXXXD motif motif is present at residues 229–234 (HQTEAD).

The protein belongs to the GPAT/DAPAT family.

It localises to the plastid. It is found in the chloroplast stroma. It catalyses the reaction sn-glycerol 3-phosphate + an acyl-CoA = a 1-acyl-sn-glycero-3-phosphate + CoA. It participates in phospholipid metabolism; CDP-diacylglycerol biosynthesis; CDP-diacylglycerol from sn-glycerol 3-phosphate: step 1/3. Esterifies acyl-group from acyl-ACP to the sn-1 position of glycerol-3-phosphate. The enzyme from chilling-resistant plants discriminates against non-fluid palmitic acid and selects oleic acid whereas the enzyme from sensitive plants accepts both fatty acids. The chain is Glycerol-3-phosphate acyltransferase, chloroplastic from Carthamus tinctorius (Safflower).